Consider the following 261-residue polypeptide: Class II histocompatibility antigen, M beta 1 chain (261 aa).

A signal peptide spans 1-18; sequence MAALWLLLLVLSLHCMGA. The segment at 19 to 112 is beta-1; that stretch reads GGFVAHVEST…PFWNALTHRT (94 aa). Topologically, residues 19 to 218 are lumenal; it reads GGFVAHVEST…PGLSPIQTVK (200 aa). Intrachain disulfides connect C29–C97, C43–C53, and C135–C192. A glycan (N-linked (GlcNAc...) asparagine) is linked at N75. The interval 113-207 is beta-2; it reads RPPSVRVAQT…GTSEPIRGDW (95 aa). The region spanning 114 to 204 is the Ig-like C1-type domain; the sequence is PPSVRVAQTT…QHSGTSEPIR (91 aa). The segment at 208–218 is connecting peptide; sequence TPGLSPIQTVK. A helical membrane pass occupies residues 219-239; sequence VSVSAATLGLGFIIFCVGFFR. The Cytoplasmic portion of the chain corresponds to 240 to 261; the sequence is WRKSHSSSYTPLSGSTYPEGRH. Positions 248 to 251 match the YXXZ motif motif; sequence YTPL.

It belongs to the MHC class II family. As to quaternary structure, heterodimer of an alpha chain (DMA) and a beta chain (DMB). Interacts with MHCII; this interaction mediates rapid selection of high-affinity peptides.

Its subcellular location is the late endosome membrane. The protein localises to the lysosome membrane. In terms of biological role, plays a critical role in catalyzing the release of class II-associated invariant chain peptide (CLIP) from newly synthesized MHC class II molecules and freeing the peptide binding site for acquisition of antigenic peptides. The protein is Class II histocompatibility antigen, M beta 1 chain (H2-DMb1) of Mus musculus (Mouse).